The following is a 517-amino-acid chain: Cytochrome b mRNA maturase bI3 (517 aa).

The Mitochondrial matrix segment spans residues 1–31 (MAFRKSNVYLSLVNSYIIDSPQPSSINYWWN). The cytochrome b stretch occupies residues 1–169 (MAFRKSNVYL…DIVSWLWGGF (169 aa)). The chain crosses the membrane as a helical span at residues 32–52 (MGSLLGLCLVIQIVTGIFMAM). The Mitochondrial intermembrane segment spans residues 53-84 (HYSSNIELAFSSVEHIMRDVHNGYILRYLHAN). A helical membrane pass occupies residues 85 to 105 (GASFFFMVMFMHMAKGLYYGS). Topologically, residues 106–115 (YRSPRVTLWN) are mitochondrial matrix. Residues 116–136 (VGVIIFILTIATAFLGYCCVY) form a helical membrane-spanning segment. The Mitochondrial intermembrane segment spans residues 137–145 (GQMSHWGAT). The helical transmembrane segment at 146-166 (VITNLFSAIPFVGNDIVSWLW) threads the bilayer. The Mitochondrial matrix portion of the chain corresponds to 167–184 (GGFNMEDPYYSNMMLNKS). Residues 170–517 (NMEDPYYSNM…NNYFKIPPKY (348 aa)) are maturase. The helical transmembrane segment at 185–205 (VLCWNIFIWMMNYYIIQLIIY) threads the bilayer. The Mitochondrial intermembrane portion of the chain corresponds to 206 to 224 (NNMIWNKNNMVKMFIMRRK). A helical transmembrane segment spans residues 225 to 242 (LAVINMYMYMKLIIQRTY). At 243–517 (SYYMNNTIIY…NNYFKIPPKY (275 aa)) the chain is on the mitochondrial matrix side.

In the N-terminal section; belongs to the cytochrome b family. This sequence in the C-terminal section; belongs to the LAGLIDADG endonuclease family. Forms a ribonucleoprotein complex composed of maturase bI3 and 2 dimers of MRS1 that assemble around the bI3 RNA.

The protein localises to the mitochondrion inner membrane. Mitochondrial mRNA maturase required for splicing of intron 3 of the cytochrome b (COB) gene, containing its own coding sequence. In vivo splicing requires the formation of a ribonucleoprotein complex together with the imported mitochondrial RNA-splicing protein MRS1. The complex seems to stimulate the intrinsic ribozyme activity of intron bI3 through binding to and stabilizing specific secondary and tertiary structure elements in the RNA. The chain is Cytochrome b mRNA maturase bI3 (BI3) from Saccharomyces cerevisiae (strain ATCC 204508 / S288c) (Baker's yeast).